Here is a 308-residue protein sequence, read N- to C-terminus: Glycine--tRNA ligase alpha subunit (308 aa).

It belongs to the class-II aminoacyl-tRNA synthetase family. In terms of assembly, tetramer of two alpha and two beta subunits.

Its subcellular location is the cytoplasm. It catalyses the reaction tRNA(Gly) + glycine + ATP = glycyl-tRNA(Gly) + AMP + diphosphate. The polypeptide is Glycine--tRNA ligase alpha subunit (Streptococcus pyogenes serotype M3 (strain SSI-1)).